Here is a 182-residue protein sequence, read N- to C-terminus: Large ribosomal subunit protein uL5 (182 aa).

The protein belongs to the universal ribosomal protein uL5 family. As to quaternary structure, part of the 50S ribosomal subunit; part of the 5S rRNA/L5/L18/L25 subcomplex. Contacts the 5S rRNA and the P site tRNA. Forms a bridge to the 30S subunit in the 70S ribosome.

Functionally, this is one of the proteins that bind and probably mediate the attachment of the 5S RNA into the large ribosomal subunit, where it forms part of the central protuberance. In the 70S ribosome it contacts protein S13 of the 30S subunit (bridge B1b), connecting the 2 subunits; this bridge is implicated in subunit movement. Contacts the P site tRNA; the 5S rRNA and some of its associated proteins might help stabilize positioning of ribosome-bound tRNAs. The protein is Large ribosomal subunit protein uL5 of Thermus thermophilus (strain ATCC BAA-163 / DSM 7039 / HB27).